The sequence spans 169 residues: uncharacterized protein (169 aa).

The signal sequence occupies residues 1-21 (MVPVARASLFTLACLLVSVCA).

As to expression, component of the acid-soluble and acid-insoluble organic matrix of calcified shell layers (at protein level).

Its subcellular location is the secreted. This is an uncharacterized protein from Haliotis asinina (Donkey's ear abalone).